We begin with the raw amino-acid sequence, 444 residues long: N-succinylarginine dihydrolase (444 aa).

Substrate contacts are provided by residues Ala-19–Ser-28, Asn-110, and His-137–Arg-138. Residue Glu-174 is part of the active site. Arg-214 serves as a coordination point for substrate. The active site involves His-250. Substrate-binding residues include Asp-252 and Asn-362. The active-site Nucleophile is Cys-368.

This sequence belongs to the succinylarginine dihydrolase family. As to quaternary structure, homodimer.

The enzyme catalyses N(2)-succinyl-L-arginine + 2 H2O + 2 H(+) = N(2)-succinyl-L-ornithine + 2 NH4(+) + CO2. It functions in the pathway amino-acid degradation; L-arginine degradation via AST pathway; L-glutamate and succinate from L-arginine: step 2/5. Functionally, catalyzes the hydrolysis of N(2)-succinylarginine into N(2)-succinylornithine, ammonia and CO(2). The sequence is that of N-succinylarginine dihydrolase from Shewanella sp. (strain ANA-3).